The sequence spans 405 residues: Diaminohydroxyphosphoribosylamino-pyrimidine deaminase (405 aa).

The CMP/dCMP-type deaminase domain maps to 256-383 (YNHEEYMLKA…DLLKKAGIVV (128 aa)). His305 provides a ligand contact to Zn(2+). The active-site Proton donor is Glu307. Residues Cys335 and Cys345 each coordinate Zn(2+).

This sequence belongs to the cytidine and deoxycytidylate deaminase family. It depends on Zn(2+) as a cofactor.

Its subcellular location is the cytoplasm. It is found in the nucleus. The catalysed reaction is 2,5-diamino-6-hydroxy-4-(5-phosphoribosylamino)-pyrimidine + H2O + H(+) = 5-amino-6-(5-phospho-D-ribosylamino)uracil + NH4(+). The protein operates within cofactor biosynthesis; riboflavin biosynthesis; 5-amino-6-(D-ribitylamino)uracil from GTP: step 2/4. In terms of biological role, involved in riboflavin biosynthesis. Converts 2,5-diamino-6-(ribosylamino)-4(3H)-pyrimidinone 5'-phosphate into 5-amino-6-(ribosylamino)-2,4(1H,3H)-pyrimidinedione 5'-phosphate. This is Diaminohydroxyphosphoribosylamino-pyrimidine deaminase from Schizosaccharomyces pombe (strain 972 / ATCC 24843) (Fission yeast).